The chain runs to 779 residues: Guanyl-specific ribonuclease pgl-1 (779 aa).

The tract at residues 203–464 (KLLLEGVKEQ…KRIIDALEKS (262 aa)) is involved in dimerization. H453 functions as the Proton acceptor in the catalytic mechanism. Disordered regions lie at residues 563-596 (HEPQ…PTKS), 611-661 (RDAL…GDAT), and 718-779 (GRGG…GGNF). Residues 584-595 (SISTDGWDSPTK) are compositionally biased toward polar residues. The span at 612-626 (DALKPDSVNSHRSEE) shows a compositional bias: basic and acidic residues. The interval 699–772 (GGGGGSYGGR…GGDRGGRGGY (74 aa)) is RNA-binding RGG-box.

In terms of assembly, homodimer. Interacts with pgl-2 and pgl-3; this association is not required for P-granule localization of either pgl-2 or pgl-3. Interacts with ife-1. Interacts with prmt-1; the interaction is direct. Interacts with nmad-1. Interacts with P granule components meg-1, meg-3 and meg-4. It depends on Does not require metal ions for catalytic activity. as a cofactor.

It localises to the cytoplasmic granule. It carries out the reaction [RNA] containing guanosine + H2O = an [RNA fragment]-3'-guanosine-3'-phosphate + a 5'-hydroxy-ribonucleotide-3'-[RNA fragment].. Guanyl-specific endoribonuclease which cleaves the phosphodiester bond in single-stranded RNA between the 3'-guanylic residue and the 5'-OH residue of adjacent nucleotide, resulting in the formation of a corresponding 2',3'-cyclic phosphate intermediate. Essential role in male and female postembryonic germline development; maternally provided protein maintains a population of proliferating germ cells and zygotic expression is required for correct oogenesis. Together with the P-granule component pgl-3, is involved in the formation of P-granules. Together with pgl-3, probably recruits other granule components such as pos-1, mex-3 and glh-1 to P-granules. In addition, may act redundantly with pgl-3 to protect germ cells from excessive germline apoptosis during normal oogenesis and development of the two gonadal arms. This may in part be through regulating the localization of sir-2.1 which is involved in germ cell apoptosis. May protect somatic cells from excessive apoptosis during normal development. In Caenorhabditis remanei (Caenorhabditis vulgaris), this protein is Guanyl-specific ribonuclease pgl-1.